Reading from the N-terminus, the 177-residue chain is Ribonuclease H (177 aa).

One can recognise an RNase H type-1 domain in the interval M1–A142. Mg(2+)-binding residues include D10, E48, D70, and D134. Residues G126–R138 are compositionally biased toward basic and acidic residues. Positions G126–Y177 are disordered.

This sequence belongs to the RNase H family. In terms of assembly, monomer. Mg(2+) serves as cofactor.

The protein localises to the cytoplasm. It carries out the reaction Endonucleolytic cleavage to 5'-phosphomonoester.. In terms of biological role, endonuclease that specifically degrades the RNA of RNA-DNA hybrids. The sequence is that of Ribonuclease H from Mesorhizobium japonicum (strain LMG 29417 / CECT 9101 / MAFF 303099) (Mesorhizobium loti (strain MAFF 303099)).